The following is an 849-amino-acid chain: Membrane protein-large ribosomal subunit bL9 fusion protein (849 aa).

The unknown stretch occupies residues 1–680; it reads MFSKNKHNTK…TQLEGTNIKT (680 aa). 2 consecutive transmembrane segments (helical) span residues 11 to 31 and 64 to 84; these read FIVI…LDFQ and IIFF…VISF. Residues 214-342 form the GGDEF domain; the sequence is KTLALAMITF…GGDQVVVNIE (129 aa). The tract at residues 681–849 is large ribosomal subunit protein bL9; sequence VTDTLKHFLK…FLNVTERKSK (169 aa).

This sequence belongs to the bacterial ribosomal protein bL9 family.

Its subcellular location is the cell membrane. Functionally, binds to the 23S rRNA. The chain is Membrane protein-large ribosomal subunit bL9 fusion protein from Onion yellows phytoplasma (strain OY-M).